Here is a 337-residue protein sequence, read N- to C-terminus: Heme A synthase (337 aa).

Helical transmembrane passes span Ile6 to Ile26, Phe87 to Phe107, Leu119 to Val139, Leu154 to Lys174, and Leu192 to Val212. His256 provides a ligand contact to heme. 3 helical membrane passes run Leu258–Glu278, Ile285–Leu305, and Val308–Ile328. Residue His316 participates in heme binding.

This sequence belongs to the COX15/CtaA family. Type 2 subfamily. In terms of assembly, interacts with CtaB. Heme b serves as cofactor.

The protein resides in the cell membrane. It carries out the reaction Fe(II)-heme o + 2 A + H2O = Fe(II)-heme a + 2 AH2. It participates in porphyrin-containing compound metabolism; heme A biosynthesis; heme A from heme O: step 1/1. Catalyzes the conversion of heme O to heme A by two successive hydroxylations of the methyl group at C8. The first hydroxylation forms heme I, the second hydroxylation results in an unstable dihydroxymethyl group, which spontaneously dehydrates, resulting in the formyl group of heme A. This chain is Heme A synthase, found in Rickettsia africae (strain ESF-5).